Here is a 660-residue protein sequence, read N- to C-terminus: Bifunctional polymyxin resistance protein ArnA (660 aa).

A formyltransferase ArnAFT region spans residues 1 to 304; the sequence is MKAIVFAYHD…EMGIVTDVRV (304 aa). His104 acts as the Proton donor; for formyltransferase activity in catalysis. (6R)-10-formyltetrahydrofolate is bound by residues Arg114 and 136-140; that span reads TAKAD. Residues 314–660 form a dehydrogenase ArnADH region; it reads RRQRVLILGV…RGAVEELGNK (347 aa). NAD(+) is bound by residues Asp347 and 368–369; that span reads DV. Residues Ala393, Tyr398, and 432 to 433 each bind UDP-alpha-D-glucuronate; that span reads TS. Glu434 serves as the catalytic Proton acceptor; for decarboxylase activity. Residues Arg460, Asn492, 526–535, and Tyr613 contribute to the UDP-alpha-D-glucuronate site; that span reads KLVDGGEQKR. Arg619 (proton donor; for decarboxylase activity) is an active-site residue.

This sequence in the N-terminal section; belongs to the Fmt family. UDP-L-Ara4N formyltransferase subfamily. It in the C-terminal section; belongs to the NAD(P)-dependent epimerase/dehydratase family. UDP-glucuronic acid decarboxylase subfamily. In terms of assembly, homohexamer, formed by a dimer of trimers.

The enzyme catalyses UDP-alpha-D-glucuronate + NAD(+) = UDP-beta-L-threo-pentopyranos-4-ulose + CO2 + NADH. It carries out the reaction UDP-4-amino-4-deoxy-beta-L-arabinose + (6R)-10-formyltetrahydrofolate = UDP-4-deoxy-4-formamido-beta-L-arabinose + (6S)-5,6,7,8-tetrahydrofolate + H(+). It functions in the pathway nucleotide-sugar biosynthesis; UDP-4-deoxy-4-formamido-beta-L-arabinose biosynthesis; UDP-4-deoxy-4-formamido-beta-L-arabinose from UDP-alpha-D-glucuronate: step 1/3. The protein operates within nucleotide-sugar biosynthesis; UDP-4-deoxy-4-formamido-beta-L-arabinose biosynthesis; UDP-4-deoxy-4-formamido-beta-L-arabinose from UDP-alpha-D-glucuronate: step 3/3. Its pathway is bacterial outer membrane biogenesis; lipopolysaccharide biosynthesis. Bifunctional enzyme that catalyzes the oxidative decarboxylation of UDP-glucuronic acid (UDP-GlcUA) to UDP-4-keto-arabinose (UDP-Ara4O) and the addition of a formyl group to UDP-4-amino-4-deoxy-L-arabinose (UDP-L-Ara4N) to form UDP-L-4-formamido-arabinose (UDP-L-Ara4FN). The modified arabinose is attached to lipid A and is required for resistance to polymyxin and cationic antimicrobial peptides. The protein is Bifunctional polymyxin resistance protein ArnA of Proteus mirabilis (strain HI4320).